We begin with the raw amino-acid sequence, 449 residues long: tRNA-2-methylthio-N(6)-dimethylallyladenosine synthase (449 aa).

The 116-residue stretch at 3–118 (KKVFVKTFGC…LPELLAQREA (116 aa)) folds into the MTTase N-terminal domain. [4Fe-4S] cluster contacts are provided by Cys12, Cys49, Cys81, Cys155, Cys159, and Cys162. The Radical SAM core domain maps to 141-376 (RVEGASAFVS…VINANIKSIS (236 aa)). The TRAM domain occupies 377–440 (ESRVGTVQRI…AYTLRGEVVT (64 aa)).

Belongs to the methylthiotransferase family. MiaB subfamily. Monomer. [4Fe-4S] cluster is required as a cofactor.

The protein localises to the cytoplasm. The enzyme catalyses N(6)-dimethylallyladenosine(37) in tRNA + (sulfur carrier)-SH + AH2 + 2 S-adenosyl-L-methionine = 2-methylsulfanyl-N(6)-dimethylallyladenosine(37) in tRNA + (sulfur carrier)-H + 5'-deoxyadenosine + L-methionine + A + S-adenosyl-L-homocysteine + 2 H(+). Its function is as follows. Catalyzes the methylthiolation of N6-(dimethylallyl)adenosine (i(6)A), leading to the formation of 2-methylthio-N6-(dimethylallyl)adenosine (ms(2)i(6)A) at position 37 in tRNAs that read codons beginning with uridine. This is tRNA-2-methylthio-N(6)-dimethylallyladenosine synthase from Paracidovorax citrulli (strain AAC00-1) (Acidovorax citrulli).